Here is a 188-residue protein sequence, read N- to C-terminus: Surfactant protein C (188 aa).

Residues 1–23 (MDMGSKEALMESPPDYSAAPRGR) constitute a propeptide that is removed on maturation. 2 S-palmitoyl cysteine lipidation sites follow: cysteine 28 and cysteine 29. The propeptide occupies 59–188 (HMSQKHTEMV…LCGEVPLIYI (130 aa)). The BRICHOS domain maps to 94-188 (FPIGSTGIVT…LCGEVPLIYI (95 aa)). Cysteine 121 and cysteine 180 are oxidised to a cystine. The segment at 144 to 164 (NPAEPPTQRGQDKGPAAGPAS) is disordered.

It is found in the secreted. It localises to the extracellular space. The protein localises to the surface film. Functionally, pulmonary surfactant associated proteins promote alveolar stability by lowering the surface tension at the air-liquid interface in the peripheral air spaces. This Oryctolagus cuniculus (Rabbit) protein is Surfactant protein C (SFTPC).